A 164-amino-acid chain; its full sequence is Protein PPLZ02 (164 aa).

The segment at residues 7-64 is a DNA-binding region (AP2/ERF); it reads RYRGFRQRHWGSWVSEIRHSILKTRIWQGTFESAEDAARAYDEAARLMCGTRARTNFP.

It localises to the nucleus. Functionally, essential for all lupin cells independent of the respective tissue. This chain is Protein PPLZ02 (PPLZ02), found in Lupinus polyphyllus (Large-leaved lupine).